The following is a 343-amino-acid chain: KRR1 small subunit processome component homolog (343 aa).

The region spanning 126–194 is the KH domain; that stretch reads DIIKIGNLVH…VRDIVLETMN (69 aa). Basic residues predominate over residues 230–246; sequence KNKNISKRKQPKNKKPK. The segment at 230–343 is disordered; sequence KNKNISKRKQ…LMKANKKNRS (114 aa). Composition is skewed to basic and acidic residues over residues 272–303 and 318–331; these read LNKE…RNKD and RPAE…DALK. A coiled-coil region spans residues 272-341; sequence LNKEQKQAKK…AKLMKANKKN (70 aa). Residues 333-343 show a composition bias toward basic residues; it reads KLMKANKKNRS.

The protein belongs to the KRR1 family. In terms of assembly, monomer. Component of the ribosomal small subunit (SSU) processome.

The protein localises to the nucleus. The protein resides in the nucleolus. In terms of biological role, required for 40S ribosome biogenesis. Involved in nucleolar processing of pre-18S ribosomal RNA and ribosome assembly. Binds to RNA. Required for female germline development, cell viability during eye development and for survival of dividing cells and epithelial cells during early wing disk development. In Drosophila virilis (Fruit fly), this protein is KRR1 small subunit processome component homolog.